Reading from the N-terminus, the 102-residue chain is A-type ATP synthase subunit F (102 aa).

Belongs to the V-ATPase F subunit family. Has multiple subunits with at least A(3), B(3), C, D, E, F, H, I and proteolipid K(x).

It localises to the cell membrane. Functionally, component of the A-type ATP synthase that produces ATP from ADP in the presence of a proton gradient across the membrane. This is A-type ATP synthase subunit F from Thermococcus kodakarensis (strain ATCC BAA-918 / JCM 12380 / KOD1) (Pyrococcus kodakaraensis (strain KOD1)).